We begin with the raw amino-acid sequence, 197 residues long: MANYPQLNKEVQQGEIKVVMHTNKGDMTFKLFPNIAPKTVENFVTHAKNGYYDGITFHRVINDFMIQGGDPTATGMGGESIYGGAFEDEFSLNAFNLYGALSMANSGPNTNGSQFFIVQMKEVPQNMLSQLADGGWPQPIVDAYGEKGGTPWLDQKHTVFGQIIDGETTLEDIANTKVGPQDKPLHDVVIESIDVEE.

Residues 14 to 195 (GEIKVVMHTN…HDVVIESIDV (182 aa)) enclose the PPIase cyclophilin-type domain.

The protein belongs to the cyclophilin-type PPIase family.

It catalyses the reaction [protein]-peptidylproline (omega=180) = [protein]-peptidylproline (omega=0). In terms of biological role, PPIases accelerate the folding of proteins. It catalyzes the cis-trans isomerization of proline imidic peptide bonds in oligopeptides. This Staphylococcus aureus (strain bovine RF122 / ET3-1) protein is Putative peptidyl-prolyl cis-trans isomerase.